We begin with the raw amino-acid sequence, 475 residues long: ATP synthase subunit beta 1 (475 aa).

152 to 159 (GGAGVGKT) provides a ligand contact to ATP.

This sequence belongs to the ATPase alpha/beta chains family. As to quaternary structure, F-type ATPases have 2 components, CF(1) - the catalytic core - and CF(0) - the membrane proton channel. CF(1) has five subunits: alpha(3), beta(3), gamma(1), delta(1), epsilon(1). CF(0) has four main subunits: a(1), b(1), b'(1) and c(9-12).

Its subcellular location is the cell inner membrane. It catalyses the reaction ATP + H2O + 4 H(+)(in) = ADP + phosphate + 5 H(+)(out). In terms of biological role, produces ATP from ADP in the presence of a proton gradient across the membrane. The catalytic sites are hosted primarily by the beta subunits. The protein is ATP synthase subunit beta 1 of Cereibacter sphaeroides (strain ATCC 17029 / ATH 2.4.9) (Rhodobacter sphaeroides).